The following is a 487-amino-acid chain: Catalase (487 aa).

The interval 1-20 (MSQRVLTTESGAPVADNQNS) is disordered. Catalysis depends on residues His-54 and Asn-127. Residue Tyr-337 participates in heme binding.

Belongs to the catalase family. The cofactor is heme.

The catalysed reaction is 2 H2O2 = O2 + 2 H2O. Functionally, decomposes hydrogen peroxide into water and oxygen; serves to protect cells from the toxic effects of hydrogen peroxide. This is Catalase (katA) from Streptomyces coelicolor (strain ATCC BAA-471 / A3(2) / M145).